The following is a 193-amino-acid chain: Molybdenum cofactor guanylyltransferase (193 aa).

Residues 8–10 (LAG), lysine 21, aspartate 67, and aspartate 98 each bind GTP. Residue aspartate 98 coordinates Mg(2+).

Belongs to the MobA family. Monomer. The cofactor is Mg(2+).

Its subcellular location is the cytoplasm. The enzyme catalyses Mo-molybdopterin + GTP + H(+) = Mo-molybdopterin guanine dinucleotide + diphosphate. Its function is as follows. Transfers a GMP moiety from GTP to Mo-molybdopterin (Mo-MPT) cofactor (Moco or molybdenum cofactor) to form Mo-molybdopterin guanine dinucleotide (Mo-MGD) cofactor. In Cereibacter sphaeroides (Rhodobacter sphaeroides), this protein is Molybdenum cofactor guanylyltransferase.